Here is a 260-residue protein sequence, read N- to C-terminus: uncharacterized protein (260 aa).

The signal sequence occupies residues 1–22 (MGYIKRIGLYISIFILIVMVAG). Cysteine 23 carries the N-palmitoyl cysteine lipid modification. Residue cysteine 23 is the site of S-diacylglycerol cysteine attachment.

The protein belongs to the staphylococcal tandem lipoprotein family.

The protein resides in the cell membrane. This is an uncharacterized protein from Staphylococcus aureus (strain bovine RF122 / ET3-1).